A 192-amino-acid chain; its full sequence is Fe/S biogenesis protein NfuA (192 aa).

[4Fe-4S] cluster is bound by residues C149 and C152.

This sequence belongs to the NfuA family. In terms of assembly, homodimer. It depends on [4Fe-4S] cluster as a cofactor.

Involved in iron-sulfur cluster biogenesis. Binds a 4Fe-4S cluster, can transfer this cluster to apoproteins, and thereby intervenes in the maturation of Fe/S proteins. Could also act as a scaffold/chaperone for damaged Fe/S proteins. This chain is Fe/S biogenesis protein NfuA, found in Pseudoalteromonas atlantica (strain T6c / ATCC BAA-1087).